The sequence spans 495 residues: MAMDTFPFQWPMDPAASSGLDAGFLPPPAAVAPDDGVGYYDPPAGADVDAAALPEFAAAFPPCAPDAAAAVLAMRREEEEVAGIRLVHLLMSCAGAIEAGDHALASAQLADSHAALAAVSAASGIGRVAVHFTTALSRRLFPSPVAPPTTDAEHAFLYHHFYEACPYLKFAHFTANQAILEAFHGCDHVHVIDFSLMQGLQWPALIQALALRPGGPPFLRITGIGPPSPTGRDELRDVGLRLADLARSVRVRFSFRGVAANSLDEVRPWMLQIAPGEAVAFNSVLQLHRLLGDPADQAPIDAVLDCVASVRPKIFTVIEQEADHNKTGFLDRFTEALFYYSAVFDSLDAASASGGAGNAMAEAYLQREICDIVCGEGAARRERHEPLSRWRDRLTRAGLSAVPLGSNALRQARMLVGLFSGEGHSVEEADGCLTLGWHGRPLFSASAWEAAGDGGGDNNNNSNSNVSGSSGSDSNNSGSSNGKSSGARDGSSVCL.

A GRAS domain is found at Glu77 to Glu449. The tract at residues Ile84 to Leu140 is leucine repeat I (LRI). Positions Tyr158–Gly223 are VHIID. The short motif at Val189–Asp193 is the VHIID element. The tract at residues Asp237 to Trp269 is leucine repeat II (LRII). A PFYRE region spans residues Val279 to Asp371. The LXXLL motif signature appears at Leu287–Leu291. The segment at Cys374–Glu449 is SAW. A disordered region spans residues Ala451 to Leu495. Residues Asn458–Ser485 show a composition bias toward low complexity.

It belongs to the GRAS family. Expressed in elongating internodes and flowers. Expressed in floral meristem, stamen primordia and tapetum in developing anthers. Expressed at low levels in roots, shoot apices and rachis.

Its subcellular location is the nucleus. Probable transcriptional regulator that acts as a repressor of the gibberellin (GA) signaling pathway. Its repressive activity is weaker than that of SLR1. Its overexpression prevents the GA signaling pathway and induces a dwarf phenotype. The polypeptide is Protein SLENDER RICE1-LIKE 1 (Oryza sativa subsp. japonica (Rice)).